The following is a 290-amino-acid chain: UPF0761 membrane protein YihY (290 aa).

The next 6 helical transmembrane spans lie at 44–64 (LLSL…FPMF), 104–124 (VGAC…DSAL), 140–160 (FAVY…SLAI), 183–203 (IFPL…VPTI), 210–230 (AIVG…GFAL), and 244–264 (VLAV…IVLL).

Belongs to the UPF0761 family.

Its subcellular location is the cell inner membrane. In Escherichia coli O1:K1 / APEC, this protein is UPF0761 membrane protein YihY.